A 427-amino-acid chain; its full sequence is Adenylosuccinate synthetase (427 aa).

GTP is bound by residues 12-18 (GDEGKGK) and 40-42 (GHT). Catalysis depends on D13, which acts as the Proton acceptor. Mg(2+)-binding residues include D13 and G40. IMP is bound by residues 13–16 (DEGK), 38–41 (NAGH), T128, R142, Q223, T238, and R302. Residue H41 is the Proton donor of the active site. 298–304 (TTTGRPR) lines the substrate pocket. GTP contacts are provided by residues R304, 330–332 (LLD), and 412–414 (SVG).

It belongs to the adenylosuccinate synthetase family. Homodimer. Requires Mg(2+) as cofactor.

Its subcellular location is the cytoplasm. The catalysed reaction is IMP + L-aspartate + GTP = N(6)-(1,2-dicarboxyethyl)-AMP + GDP + phosphate + 2 H(+). It participates in purine metabolism; AMP biosynthesis via de novo pathway; AMP from IMP: step 1/2. Plays an important role in the de novo pathway of purine nucleotide biosynthesis. Catalyzes the first committed step in the biosynthesis of AMP from IMP. This Alkaliphilus metalliredigens (strain QYMF) protein is Adenylosuccinate synthetase.